The primary structure comprises 329 residues: Transcription factor RAX1 (329 aa).

HTH myb-type domains are found at residues 9–62 (KTKV…LNYL) and 63–117 (RPNI…RKKL). DNA-binding regions (H-T-H motif) lie at residues 38–62 (WISF…LNYL) and 90–113 (WSII…NTKL). Low complexity-rich tracts occupy residues 122 to 131 (SDSSSSAMAS) and 144 to 154 (PTSPTTIPSSS). A disordered region spans residues 122-162 (SDSSSSAMASPYLNPISQDVKRPTSPTTIPSSSYNPYAENP).

In terms of tissue distribution, mostly expressed in roots. Also present in shoot tips and flower buds.

The protein localises to the nucleus. Transcription activator of genes involved in the regulation of meristematic competence, such as CUC2. Positively regulates axillary meristems (AMs) formation and development, especially at early phases of vegetative growth, probably by specifying a stem cell niche for AM formation. Modulates the negative regulation mediated by gibberellic acid on the timing of developmental phase transitions. The polypeptide is Transcription factor RAX1 (RAX1) (Arabidopsis thaliana (Mouse-ear cress)).